The primary structure comprises 243 residues: Triosephosphate isomerase (243 aa).

Position 9-11 (9-11) interacts with substrate; sequence NWK. The active-site Electrophile is His96. The active-site Proton acceptor is the Glu165. Residues Gly171, Ser204, and 225-226 each bind substrate; that span reads GG.

Belongs to the triosephosphate isomerase family. Homodimer.

The protein resides in the cytoplasm. The enzyme catalyses D-glyceraldehyde 3-phosphate = dihydroxyacetone phosphate. It functions in the pathway carbohydrate biosynthesis; gluconeogenesis. The protein operates within carbohydrate degradation; glycolysis; D-glyceraldehyde 3-phosphate from glycerone phosphate: step 1/1. In terms of biological role, involved in the gluconeogenesis. Catalyzes stereospecifically the conversion of dihydroxyacetone phosphate (DHAP) to D-glyceraldehyde-3-phosphate (G3P). The chain is Triosephosphate isomerase from Prochlorococcus marinus (strain SARG / CCMP1375 / SS120).